Reading from the N-terminus, the 363-residue chain is Zinc phosphodiesterase ELAC protein 1 (363 aa).

The Zn(2+) site is built by His62, His64, Asp66, His67, His182, Asp253, and His313. The Proton acceptor role is filled by Asp66.

Belongs to the RNase Z family. Homodimer. Requires Zn(2+) as cofactor.

It localises to the cytoplasm. It is found in the cytosol. The protein resides in the nucleus. The enzyme catalyses Endonucleolytic cleavage of RNA, removing extra 3' nucleotides from tRNA precursor, generating 3' termini of tRNAs. A 3'-hydroxy group is left at the tRNA terminus and a 5'-phosphoryl group is left at the trailer molecule.. Zinc phosphodiesterase, which displays some tRNA 3'-processing endonuclease activity. Specifically involved in tRNA repair: acts downstream of the ribosome-associated quality control (RQC) pathway by removing a 2',3'-cyclic phosphate from tRNAs following cleavage by ANKZF1. tRNAs are then processed by TRNT1. This chain is Zinc phosphodiesterase ELAC protein 1 (ELAC1), found in Bos taurus (Bovine).